The primary structure comprises 84 residues: Small ribosomal subunit protein uS17 (84 aa).

Belongs to the universal ribosomal protein uS17 family. As to quaternary structure, part of the 30S ribosomal subunit.

One of the primary rRNA binding proteins, it binds specifically to the 5'-end of 16S ribosomal RNA. This Shigella boydii serotype 18 (strain CDC 3083-94 / BS512) protein is Small ribosomal subunit protein uS17.